Reading from the N-terminus, the 805-residue chain is MAERVLTRVHSLRERLDATLAAHRNEILLFLSRIESHGKGILKPHQLLAEFESIHKEDKDKLNDHAFEEVLKSTQEAIVLPPWVALAIRLRPGVWEYVRVNVNALIVEELTVPEFLQFKEELVNGTSNDNFVLELDFEPFTASFPKPTLTKSIGNGVEFLNRHLSAKMFHDKESMTPLLEFLRVHHYKGKTMMLNDRIQNLYTLQKVLRKAEEYLTTLSPETSYSAFEHKFQEIGLERGWGDTAERVLEMICMLLDLLEAPDSCTLEKFLGRIPMVFNVVILSPHGYFAQENVLGYPDTGGQVVYILDQVPALEREMLKRIKEQGLDIKPRILIVTRLLPDAVGTTCGQRLEKVFGTEHSHILRVPFRTEKGIVRKWISRFEVWPYMETFIEDVGKEITAELQAKPDLIIGNYSEGNLAASLLAHKLGVTQCTIAHALEKTKYPDSDIYLNKFDEKYHFSAQFTADLIAMNHTDFIITSTFQEIAGSKDTVGQYESHMAFTMPGLYRVVHGIDVFDPKFNIVSPGADVNLYFPYSEKEKRLTTFHPEIEDLLFSDVENEEHLCVLKDRNKPIIFTMARLDRVKNLTGLVEWYAKNPRLRELVNLVVVGGDRRKESKDLEEQAEMKKMYELIKTHNLNGQFRWISSQMNRVRNGELYRYIADTRGAFVQPAFYEAFGLTVVEAMSCGLPTFATNQGGPAEIIVHGKSGFQIDPYHGEQAADLLADFFEKCKVDPSHWEAISEGGLKRIQEKYTWQIYSDRLLTLAAVYGFWKHVSKLDRLEIRRYLEMFYALKFRKLAQLVPLAVE.

Residues 275 to 752 form a GT-B glycosyltransferase region; the sequence is MVFNVVILSP…GLKRIQEKYT (478 aa).

Belongs to the glycosyltransferase 1 family. Plant sucrose synthase subfamily.

The enzyme catalyses an NDP-alpha-D-glucose + D-fructose = a ribonucleoside 5'-diphosphate + sucrose + H(+). In terms of biological role, sucrose-cleaving enzyme that provides UDP-glucose and fructose for various metabolic pathways. This is Sucrose synthase from Solanum tuberosum (Potato).